Consider the following 393-residue polypeptide: Pyruvate dehydrogenase E1 component subunit alpha-2, mitochondrial (393 aa).

Residues 1 to 28 (MALSRLSSRSNTFLKPAITALPSSIRRH) constitute a mitochondrion transit peptide. Residues His-94, Tyr-120, Arg-121, Gly-169, Val-171, Asp-200, Gly-201, Ala-202, Asn-229, and Tyr-231 each contribute to the pyruvate site. The thiamine diphosphate site is built by Tyr-120, Arg-121, Gly-169, Val-171, Asp-200, Gly-201, Ala-202, and Asn-229. Asp-200 serves as a coordination point for Mg(2+). Mg(2+)-binding residues include Asn-229 and Tyr-231. Position 295 (His-295) interacts with thiamine diphosphate.

As to quaternary structure, tetramer of 2 alpha and 2 beta subunits. The cofactor is thiamine diphosphate. It depends on Mg(2+) as a cofactor.

It is found in the mitochondrion matrix. It carries out the reaction N(6)-[(R)-lipoyl]-L-lysyl-[protein] + pyruvate + H(+) = N(6)-[(R)-S(8)-acetyldihydrolipoyl]-L-lysyl-[protein] + CO2. With respect to regulation, E1 activity is regulated by phosphorylation (inactivation) and dephosphorylation (activation) of the alpha subunit. In terms of biological role, the pyruvate dehydrogenase complex catalyzes the overall conversion of pyruvate to acetyl-CoA and CO(2). It contains multiple copies of three enzymatic components: pyruvate dehydrogenase (E1), dihydrolipoamide acetyltransferase (E2) and lipoamide dehydrogenase (E3). In Arabidopsis thaliana (Mouse-ear cress), this protein is Pyruvate dehydrogenase E1 component subunit alpha-2, mitochondrial (IAR4).